We begin with the raw amino-acid sequence, 499 residues long: Interleukin-17 receptor B (499 aa).

Residues 1-17 (MLLVLLILAASCRSALP) form the signal peptide. Residues 18–286 (REPTIQCGSE…PDDNRRMLGG (269 aa)) lie on the Extracellular side of the membrane. N-linked (GlcNAc...) asparagine glycosylation is found at Asn-67, Asn-103, Asn-156, and Asn-197. Residues 287 to 307 (WLPLFLVLLVAVWVLAAGIYL) traverse the membrane as a helical segment. Over 308-499 (TWRQGRSTKT…QACHDSCSPL (192 aa)) the chain is Cytoplasmic. One can recognise an SEFIR domain in the interval 328–474 (LIKVLVVYPS…LMKDATAFHT (147 aa)).

In terms of assembly, interacts with DAZAP2. Interacts with TRAF3IP2. In terms of tissue distribution, liver and testis. Expressed at lower level in kidney and lung. Expressed in selected T-cell, B-cell and myeloid cell lines.

The protein localises to the cell membrane. Its subcellular location is the secreted. Functionally, receptor for the pro-inflammatory cytokines IL17B and IL17E. May play a role in controlling the growth and/or differentiation of hematopoietic cells. The chain is Interleukin-17 receptor B (Il17rb) from Mus musculus (Mouse).